Reading from the N-terminus, the 267-residue chain is Stomatin-3 (267 aa).

The chain crosses the membrane as a helical span at residues 17–37 (FVALICAWAFLLLTFPVSIFF).

The protein belongs to the band 7/mec-2 family.

The protein localises to the membrane. This is Stomatin-3 (sto-3) from Caenorhabditis elegans.